A 227-amino-acid polypeptide reads, in one-letter code: uncharacterized protein (227 aa).

4 consecutive transmembrane segments (helical) span residues 17–37 (VGIK…GVFS), 79–99 (GFLF…IISI), 112–132 (LMTP…LALI), and 181–201 (VAVF…ILVF).

The protein localises to the cell membrane. This is an uncharacterized protein from Escherichia coli (strain K12).